We begin with the raw amino-acid sequence, 228 residues long: Ribonuclease 3 (228 aa).

Residues Leu-2 to Gly-130 form the RNase III domain. Glu-43 serves as a coordination point for Mg(2+). Residue Asp-47 is part of the active site. Mg(2+) contacts are provided by Asp-116 and Glu-119. Glu-119 is an active-site residue. One can recognise a DRBM domain in the interval Asp-157–Ile-226.

This sequence belongs to the ribonuclease III family. In terms of assembly, homodimer. Requires Mg(2+) as cofactor.

The protein localises to the cytoplasm. It catalyses the reaction Endonucleolytic cleavage to 5'-phosphomonoester.. Digests double-stranded RNA. Involved in the processing of primary rRNA transcript to yield the immediate precursors to the large and small rRNAs (23S and 16S). Processes some mRNAs, and tRNAs when they are encoded in the rRNA operon. Processes pre-crRNA and tracrRNA of type II CRISPR loci if present in the organism. The polypeptide is Ribonuclease 3 (Caldanaerobacter subterraneus subsp. tengcongensis (strain DSM 15242 / JCM 11007 / NBRC 100824 / MB4) (Thermoanaerobacter tengcongensis)).